Consider the following 191-residue polypeptide: Small ribosomal subunit protein uS5 (191 aa).

Residues 1-21 are disordered; the sequence is MAAERERGGRERSREREERDS. The 64-residue stretch at 23–86 folds into the S5 DRBM domain; sequence FVDKLVHINR…ESAKRNLTRV (64 aa).

In terms of assembly, part of the 30S ribosomal subunit. Contacts proteins S4 and S8.

Functionally, with S4 and S12 plays an important role in translational accuracy. In terms of biological role, located at the back of the 30S subunit body where it stabilizes the conformation of the head with respect to the body. The protein is Small ribosomal subunit protein uS5 of Rhodopseudomonas palustris (strain ATCC BAA-98 / CGA009).